The primary structure comprises 489 residues: MKKTIISTLVIGLVSGCSNTNLLKDNLASEQSVINLSKSSNEAKSRNIEFLSGAYLSERKVPKHDIKFSGKYVEFESKSPIELIDVLDGLSKQYNIQYVFSDELEDENSEENKKSSGSSSAKKIKYSGPLAGFFDYLSSAYNMHFEFGHNNLVKAYHYKNQVFNLQQYFDDNKFSSSMQIGGTSGTSSGLKGTADTAIESNSWEKIDEFLSASLGETGKFTIFEDYSLVTVKARPDKFLLLHTFFDKLINESKMQIAVDYRVVSLSEERLNQLAAKFGIENAGKYSITSDMVDAISLSQVGGGLGASYRSASARLDAVVNELSQEVMHEGHFIGIPNRVMPLNVTTNSKYISSIETTKDTNTDEETRTVKVSDLVTGFSMMVMPKILDDGRIQISSGFSRKQLVSIGTAQGITLPTVDENESMNTVTMNPGEVRLAMLFKDNYIQNSNGVQLLGGGTENKKSARYIAVLVGASSYKTNDLASNRVNIYD.

The signal sequence occupies residues 1–16; sequence MKKTIISTLVIGLVSG. The N-palmitoyl cysteine moiety is linked to residue C17. A lipid anchor (S-diacylglycerol cysteine) is attached at C17. Helical transmembrane passes span 174–190, 294–308, 402–417, and 442–457; these read FSSS…SSGL, AISL…GASY, QLVS…LPTV, and NYIQ…GGGT.

Its subcellular location is the cell membrane. Involved in TCP pilus biogenesis. The sequence is that of Toxin coregulated pilus biosynthesis outer membrane protein C (tcpC) from Vibrio cholerae serotype O1 (strain ATCC 39315 / El Tor Inaba N16961).